The primary structure comprises 268 residues: MERYENLFAQLNDRREGAFVPFVTLGDPGIEQSLKIIDTLIDAGADALELGVPFSDPLADGPTIQNANLRAFAAGVTPAQCFEMLALIREKHPTIPIGLLMYANLVFNNGIDAFYARCEQVGVDSVLVADVPVEESAPFRQAALRHNIAPIFICPPNADDDLLRQVASYGRGYTYLLSRSGVTGAENRGALPLHHLIEKLKEYHAAPALQGFGISSPEQVSAAVRAGAAGAISGSAIVKIIEKNLASPKQMLAELRSFVSAMKAASRA.

Active-site proton acceptor residues include E49 and D60.

Belongs to the TrpA family. Tetramer of two alpha and two beta chains.

The catalysed reaction is (1S,2R)-1-C-(indol-3-yl)glycerol 3-phosphate + L-serine = D-glyceraldehyde 3-phosphate + L-tryptophan + H2O. It participates in amino-acid biosynthesis; L-tryptophan biosynthesis; L-tryptophan from chorismate: step 5/5. Functionally, the alpha subunit is responsible for the aldol cleavage of indoleglycerol phosphate to indole and glyceraldehyde 3-phosphate. The protein is Tryptophan synthase alpha chain of Salmonella typhimurium (strain LT2 / SGSC1412 / ATCC 700720).